The chain runs to 883 residues: AP-5 complex subunit beta-1 (883 aa).

Probably part of the adaptor protein complex 5 (AP-5).

Functionally, as part of AP-5, a probable fifth adaptor protein complex, it may be involved in endosomal transport. The protein is AP-5 complex subunit beta-1 (ap5b1) of Xenopus tropicalis (Western clawed frog).